Consider the following 100-residue polypeptide: Large ribosomal subunit protein uL23 (100 aa).

Belongs to the universal ribosomal protein uL23 family. In terms of assembly, part of the 50S ribosomal subunit. Contacts protein L29, and trigger factor when it is bound to the ribosome.

One of the early assembly proteins it binds 23S rRNA. One of the proteins that surrounds the polypeptide exit tunnel on the outside of the ribosome. Forms the main docking site for trigger factor binding to the ribosome. The chain is Large ribosomal subunit protein uL23 from Shewanella frigidimarina (strain NCIMB 400).